Consider the following 300-residue polypeptide: ADP-ribosyl cyclase/cyclic ADP-ribose hydrolase 1 (300 aa).

Over 1 to 21 (MANCEFSPVSGDKPCCRLSRR) the chain is Cytoplasmic. Residues 22–42 (AQLCLGVSILVLILVVVLAVV) traverse the membrane as a helical; Signal-anchor for type II membrane protein segment. At 43–300 (VPRWRQQWSG…PEDSSCTSEI (258 aa)) the chain is on the extracellular side. Cystine bridges form between C67/C82, C99/C180, and C160/C173. Residue N100 is glycosylated (N-linked (GlcNAc...) asparagine). The active site involves C119. N164 is a glycosylation site (N-linked (GlcNAc...) asparagine). C201 is an active-site residue. N-linked (GlcNAc...) asparagine glycans are attached at residues N209 and N219. 2 disulfides stabilise this stretch: C254–C275 and C287–C296.

It belongs to the ADP-ribosyl cyclase family. Homodimer. As to expression, expressed at high levels in pancreas, liver, kidney, brain, testis, ovary, placenta, malignant lymphoma and neuroblastoma.

Its subcellular location is the cell surface. The protein localises to the membrane. The enzyme catalyses 2'-phospho-cyclic ADP-ribose + nicotinate = nicotinate-adenine dinucleotide phosphate. It carries out the reaction NAD(+) = cyclic ADP-beta-D-ribose + nicotinamide + H(+). The catalysed reaction is NAD(+) + H2O = ADP-D-ribose + nicotinamide + H(+). It catalyses the reaction cyclic ADP-beta-D-ribose + H2O = ADP-D-ribose. The enzyme catalyses NADP(+) = 2'-phospho-cyclic ADP-ribose + nicotinamide. It carries out the reaction nicotinate + NADP(+) = nicotinate-adenine dinucleotide phosphate + nicotinamide. Its activity is regulated as follows. ATP inhibits the cADPR hydrolyzing activity. Its function is as follows. Synthesizes cyclic ADP-ribose (cADPR), a second messenger for glucose-induced insulin secretion. Synthesizes the Ca(2+) mobilizer nicotinate-adenine dinucleotide phosphate, NAADP(+), from 2'-phospho-cADPR and nicotinic acid, as well as from NADP(+) and nicotinic acid. At both pH 5.0 and pH 7.4 preferentially transforms 2'-phospho-cADPR into NAADP(+), while preferentially cleaving NADP(+) to cADPR and ADPRP rather than into NADDP(+). Has cADPR hydrolase activity. The polypeptide is ADP-ribosyl cyclase/cyclic ADP-ribose hydrolase 1 (CD38) (Homo sapiens (Human)).